Reading from the N-terminus, the 77-residue chain is Large ribosomal subunit protein uL29 (77 aa).

The protein belongs to the universal ribosomal protein uL29 family.

In Corynebacterium jeikeium (strain K411), this protein is Large ribosomal subunit protein uL29.